The sequence spans 192 residues: MAKLYFYYASMNAGKSTNLLQADFNYRERGMATMLWTAALDDRGGERAIESRIGLGADAHRFDAGTDLWQRISAAHAVQPLSCVLVDEAQFLRRDQVWQLARVADAAGIPVLCYGLRTDFQGELFEGSAALLGIADSLIELKAVCHCGRKATMNLRVDDSGAAVRAGRQTEIGGNDRYVALCRRHFSEAMGQ.

ATP contacts are provided by residues 9 to 16 and 87 to 90; these read ASMNAGKS and DEAQ. The active-site Proton acceptor is E88. 4 residues coordinate Zn(2+): C145, C147, C182, and H185.

This sequence belongs to the thymidine kinase family. As to quaternary structure, homotetramer.

It localises to the cytoplasm. It carries out the reaction thymidine + ATP = dTMP + ADP + H(+). The polypeptide is Thymidine kinase (Novosphingobium aromaticivorans (strain ATCC 700278 / DSM 12444 / CCUG 56034 / CIP 105152 / NBRC 16084 / F199)).